Reading from the N-terminus, the 205-residue chain is Ribonuclease HII (205 aa).

In terms of domain architecture, RNase H type-2 spans 15–205 (SQVCGIDEAG…SFKLRKLGEK (191 aa)). The a divalent metal cation site is built by Asp21, Glu22, and Asp117.

The protein belongs to the RNase HII family. Mn(2+) serves as cofactor. Requires Mg(2+) as cofactor.

It localises to the cytoplasm. The enzyme catalyses Endonucleolytic cleavage to 5'-phosphomonoester.. Functionally, endonuclease that specifically degrades the RNA of RNA-DNA hybrids. The polypeptide is Ribonuclease HII (Chlorobaculum tepidum (strain ATCC 49652 / DSM 12025 / NBRC 103806 / TLS) (Chlorobium tepidum)).